The chain runs to 136 residues: Ribosome-binding factor A (136 aa).

It belongs to the RbfA family. As to quaternary structure, monomer. Binds 30S ribosomal subunits, but not 50S ribosomal subunits or 70S ribosomes.

Its subcellular location is the cytoplasm. One of several proteins that assist in the late maturation steps of the functional core of the 30S ribosomal subunit. Associates with free 30S ribosomal subunits (but not with 30S subunits that are part of 70S ribosomes or polysomes). Required for efficient processing of 16S rRNA. May interact with the 5'-terminal helix region of 16S rRNA. The protein is Ribosome-binding factor A of Yersinia enterocolitica serotype O:8 / biotype 1B (strain NCTC 13174 / 8081).